The sequence spans 446 residues: 3-phosphoshikimate 1-carboxyvinyltransferase (446 aa).

Residues Lys-35, Ser-36, and Arg-40 each contribute to the 3-phosphoshikimate site. A phosphoenolpyruvate-binding site is contributed by Lys-35. Phosphoenolpyruvate is bound by residues Gly-108 and Arg-137. Ser-182, Gln-184, Asp-332, and Lys-359 together coordinate 3-phosphoshikimate. Gln-184 lines the phosphoenolpyruvate pocket. Asp-332 (proton acceptor) is an active-site residue. Phosphoenolpyruvate contacts are provided by Arg-363 and Arg-405.

Belongs to the EPSP synthase family. Monomer.

It localises to the cytoplasm. It catalyses the reaction 3-phosphoshikimate + phosphoenolpyruvate = 5-O-(1-carboxyvinyl)-3-phosphoshikimate + phosphate. It participates in metabolic intermediate biosynthesis; chorismate biosynthesis; chorismate from D-erythrose 4-phosphate and phosphoenolpyruvate: step 6/7. Its function is as follows. Catalyzes the transfer of the enolpyruvyl moiety of phosphoenolpyruvate (PEP) to the 5-hydroxyl of shikimate-3-phosphate (S3P) to produce enolpyruvyl shikimate-3-phosphate and inorganic phosphate. In Acaryochloris marina (strain MBIC 11017), this protein is 3-phosphoshikimate 1-carboxyvinyltransferase.